Here is a 162-residue protein sequence, read N- to C-terminus: UPF0114 protein PFLU_5318 (162 aa).

Transmembrane regions (helical) follow at residues 15 to 35 (LLAP…LKFF), 53 to 73 (LILV…LVMV), and 136 to 156 (LMWY…MGYL).

This sequence belongs to the UPF0114 family.

It is found in the cell membrane. This is UPF0114 protein PFLU_5318 from Pseudomonas fluorescens (strain SBW25).